A 447-amino-acid polypeptide reads, in one-letter code: Bifunctional protein GlmU (447 aa).

The pyrophosphorylase stretch occupies residues 1 to 225 (MLTVAILAAG…NGELQGINNR (225 aa)). Residues 7 to 10 (LAAG), Lys21, Gln73, and 78 to 79 (GT) contribute to the UDP-N-acetyl-alpha-D-glucosamine site. Asp103 lines the Mg(2+) pocket. Residues Gly140, Glu154, Asn169, and Asn223 each contribute to the UDP-N-acetyl-alpha-D-glucosamine site. Asn223 contributes to the Mg(2+) binding site. The segment at 226-246 (VQLSKCEETIQNLIKEKHMLG) is linker. The tract at residues 247–447 (GVTFINPASC…QVNIENWKKN (201 aa)) is N-acetyltransferase. Residues Arg328 and Lys346 each coordinate UDP-N-acetyl-alpha-D-glucosamine. His358 functions as the Proton acceptor in the catalytic mechanism. Residues Tyr361 and Asn372 each coordinate UDP-N-acetyl-alpha-D-glucosamine. Acetyl-CoA-binding residues include Ala375, Ala418, and Arg435.

The protein in the N-terminal section; belongs to the N-acetylglucosamine-1-phosphate uridyltransferase family. This sequence in the C-terminal section; belongs to the transferase hexapeptide repeat family. In terms of assembly, homotrimer. Mg(2+) is required as a cofactor.

The protein resides in the cytoplasm. The enzyme catalyses alpha-D-glucosamine 1-phosphate + acetyl-CoA = N-acetyl-alpha-D-glucosamine 1-phosphate + CoA + H(+). It carries out the reaction N-acetyl-alpha-D-glucosamine 1-phosphate + UTP + H(+) = UDP-N-acetyl-alpha-D-glucosamine + diphosphate. The protein operates within nucleotide-sugar biosynthesis; UDP-N-acetyl-alpha-D-glucosamine biosynthesis; N-acetyl-alpha-D-glucosamine 1-phosphate from alpha-D-glucosamine 6-phosphate (route II): step 2/2. It participates in nucleotide-sugar biosynthesis; UDP-N-acetyl-alpha-D-glucosamine biosynthesis; UDP-N-acetyl-alpha-D-glucosamine from N-acetyl-alpha-D-glucosamine 1-phosphate: step 1/1. It functions in the pathway bacterial outer membrane biogenesis; LPS lipid A biosynthesis. In terms of biological role, catalyzes the last two sequential reactions in the de novo biosynthetic pathway for UDP-N-acetylglucosamine (UDP-GlcNAc). The C-terminal domain catalyzes the transfer of acetyl group from acetyl coenzyme A to glucosamine-1-phosphate (GlcN-1-P) to produce N-acetylglucosamine-1-phosphate (GlcNAc-1-P), which is converted into UDP-GlcNAc by the transfer of uridine 5-monophosphate (from uridine 5-triphosphate), a reaction catalyzed by the N-terminal domain. The polypeptide is Bifunctional protein GlmU (Prochlorococcus marinus (strain MIT 9515)).